Here is a 28-residue protein sequence, read N- to C-terminus: U1-poneritoxin-Da4a (28 aa).

An Alanine amide modification is found at Ala-28.

Expressed by the venom gland.

The protein resides in the secreted. Shows a broad spectrum of activity against both Gram-positive and Gram-negative bacteria. Also has antimicrobial activity against S.cerevisiae. Has insecticidal and non-hemolytic activity. This Dinoponera australis (Giant neotropical hunting ant) protein is U1-poneritoxin-Da4a.